The primary structure comprises 68 residues: Prokaryotic ubiquitin-like protein Pup (68 aa).

The disordered stretch occupies residues Met-1–Met-37. Residues Asp-24–Phe-62 form an ARC ATPase binding region. Gln-68 is subject to Deamidated glutamine. Residue Gln-68 forms an Isoglutamyl lysine isopeptide (Gln-Lys) (interchain with K-? in acceptor proteins) linkage.

The protein belongs to the prokaryotic ubiquitin-like protein family. Strongly interacts with the proteasome-associated ATPase ARC through a hydrophobic interface; the interacting region of Pup lies in its C-terminal half. There is one Pup binding site per ARC hexamer ring. In terms of processing, is modified by deamidation of its C-terminal glutamine to glutamate by the deamidase Dop, a prerequisite to the subsequent pupylation process.

Its pathway is protein degradation; proteasomal Pup-dependent pathway. Functionally, protein modifier that is covalently attached to lysine residues of substrate proteins, thereby targeting them for proteasomal degradation. The tagging system is termed pupylation. The polypeptide is Prokaryotic ubiquitin-like protein Pup (Kocuria rhizophila (strain ATCC 9341 / DSM 348 / NBRC 103217 / DC2201)).